Reading from the N-terminus, the 493-residue chain is High affinity nitrate transporter 2.7 (493 aa).

Positions methionine 1–proline 19 are enriched in polar residues. The disordered stretch occupies residues methionine 1–valine 20. The next 12 membrane-spanning stretches (helical) occupy residues tryptophan 46 to isoleucine 66, leucine 70 to phenylalanine 90, phenylalanine 113 to leucine 133, phenylalanine 136 to phenylalanine 156, valine 174 to leucine 194, valine 202 to glycine 222, phenylalanine 257 to tyrosine 277, phenylalanine 299 to alanine 319, leucine 341 to valine 361, isoleucine 368 to valine 388, valine 400 to phenylalanine 420, and isoleucine 431 to proline 451.

It belongs to the major facilitator superfamily. Nitrate/nitrite porter (TC 2.A.1.8) family. As to expression, expressed in seeds, leaves and shoots. Lower expression in roots.

Its subcellular location is the vacuole membrane. Its function is as follows. Involved in high-affinity nitrate transport. Controls nitrate content in seeds. The protein is High affinity nitrate transporter 2.7 (NRT2.7) of Arabidopsis thaliana (Mouse-ear cress).